The chain runs to 457 residues: Acetylcholine receptor subunit alpha (457 aa).

The signal sequence occupies residues 1–20 (MEPWPLLLLFSLCSAGLVLG). Over 21-232 (SEHETRLVAK…YHFVMQRLPL (212 aa)) the chain is Extracellular. 2 cysteine pairs are disulfide-bonded: Cys-148–Cys-162 and Cys-212–Cys-213. Asn-161 is a glycosylation site (N-linked (GlcNAc...) asparagine). A helical membrane pass occupies residues 233 to 253 (YFIVNVIIPCLLFSFLTGLVF). The Cytoplasmic portion of the chain corresponds to 254–264 (YLPTDSGEKMT). The chain crosses the membrane as a helical span at residues 265-285 (LSISVLLSLTVFLLVIVELIP). Topologically, residues 286–296 (STSSAVPLIGK) are extracellular. The helical transmembrane segment at 297–317 (YMLFTMVFVIASIIITVIVIN) threads the bilayer. Residues 318–427 (THHRSPSTHV…EWKYVAMVMD (110 aa)) lie on the Cytoplasmic side of the membrane. The chain crosses the membrane as a helical span at residues 428–448 (HILLGVFMLVCIIGTLAVFAG). The Extracellular portion of the chain corresponds to 449–457 (RLIELNQQG).

It belongs to the ligand-gated ion channel (TC 1.A.9) family. Acetylcholine receptor (TC 1.A.9.1) subfamily. Alpha-1/CHRNA1 sub-subfamily. As to quaternary structure, one of the alpha chains that assemble within the acetylcholine receptor, a pentamer of two alpha chains, a beta, a delta, and a gamma (in immature muscle) or epsilon (in mature muscle) chains. The muscle heteropentamer composed of alpha-1, beta-1, delta, epsilon subunits interacts with the alpha-conotoxin ImII. In terms of assembly, is able to interact with other subunits of the acetylcholine receptor but is not assembled into functional acetylcholine-gated cation-selective channels. Isoform 1 is only expressed in skeletal muscle. Isoform 2 is constitutively expressed in skeletal muscle, brain, heart, kidney, liver, lung and thymus.

It localises to the postsynaptic cell membrane. Its subcellular location is the cell membrane. The catalysed reaction is K(+)(in) = K(+)(out). It catalyses the reaction Na(+)(in) = Na(+)(out). Upon acetylcholine binding, the AChR responds by an extensive change in conformation that affects all subunits and leads to opening of an ion-conducting channel across the plasma membrane. In terms of biological role, non functional acetylcholine receptor alpha subunit which is not integrated into functional acetylcholine-gated cation-selective channels. This Homo sapiens (Human) protein is Acetylcholine receptor subunit alpha.